A 370-amino-acid polypeptide reads, in one-letter code: Histidinol-phosphate aminotransferase 3 (370 aa).

At K233 the chain carries N6-(pyridoxal phosphate)lysine.

It belongs to the class-II pyridoxal-phosphate-dependent aminotransferase family. Histidinol-phosphate aminotransferase subfamily. In terms of assembly, homodimer. Requires pyridoxal 5'-phosphate as cofactor.

The enzyme catalyses L-histidinol phosphate + 2-oxoglutarate = 3-(imidazol-4-yl)-2-oxopropyl phosphate + L-glutamate. The protein operates within amino-acid biosynthesis; L-histidine biosynthesis; L-histidine from 5-phospho-alpha-D-ribose 1-diphosphate: step 7/9. The protein is Histidinol-phosphate aminotransferase 3 of Burkholderia lata (strain ATCC 17760 / DSM 23089 / LMG 22485 / NCIMB 9086 / R18194 / 383).